The following is a 240-amino-acid chain: Pyridoxine 5'-phosphate synthase (240 aa).

Position 7 (Asn-7) interacts with 3-amino-2-oxopropyl phosphate. 9–10 lines the 1-deoxy-D-xylulose 5-phosphate pocket; it reads DH. Arg-18 provides a ligand contact to 3-amino-2-oxopropyl phosphate. The Proton acceptor role is filled by His-43. 1-deoxy-D-xylulose 5-phosphate contacts are provided by Arg-45 and His-50. The active-site Proton acceptor is the Glu-70. Thr-100 contacts 1-deoxy-D-xylulose 5-phosphate. The active-site Proton donor is the His-191. 3-amino-2-oxopropyl phosphate contacts are provided by residues Gly-192 and 213–214; that span reads GH.

This sequence belongs to the PNP synthase family. As to quaternary structure, homooctamer; tetramer of dimers.

The protein resides in the cytoplasm. It carries out the reaction 3-amino-2-oxopropyl phosphate + 1-deoxy-D-xylulose 5-phosphate = pyridoxine 5'-phosphate + phosphate + 2 H2O + H(+). It participates in cofactor biosynthesis; pyridoxine 5'-phosphate biosynthesis; pyridoxine 5'-phosphate from D-erythrose 4-phosphate: step 5/5. Functionally, catalyzes the complicated ring closure reaction between the two acyclic compounds 1-deoxy-D-xylulose-5-phosphate (DXP) and 3-amino-2-oxopropyl phosphate (1-amino-acetone-3-phosphate or AAP) to form pyridoxine 5'-phosphate (PNP) and inorganic phosphate. The sequence is that of Pyridoxine 5'-phosphate synthase from Microcystis aeruginosa (strain NIES-843 / IAM M-2473).